The following is a 345-amino-acid chain: Biotin synthase (345 aa).

The Radical SAM core domain maps to 39 to 266 (NEVQVSTLLS…ASHVRLSAGR (228 aa)). The [4Fe-4S] cluster site is built by Cys54, Cys58, and Cys61. 4 residues coordinate [2Fe-2S] cluster: Cys98, Cys129, Cys189, and Arg261.

It belongs to the radical SAM superfamily. Biotin synthase family. As to quaternary structure, homodimer. It depends on [4Fe-4S] cluster as a cofactor. [2Fe-2S] cluster serves as cofactor.

It carries out the reaction (4R,5S)-dethiobiotin + (sulfur carrier)-SH + 2 reduced [2Fe-2S]-[ferredoxin] + 2 S-adenosyl-L-methionine = (sulfur carrier)-H + biotin + 2 5'-deoxyadenosine + 2 L-methionine + 2 oxidized [2Fe-2S]-[ferredoxin]. It participates in cofactor biosynthesis; biotin biosynthesis; biotin from 7,8-diaminononanoate: step 2/2. Functionally, catalyzes the conversion of dethiobiotin (DTB) to biotin by the insertion of a sulfur atom into dethiobiotin via a radical-based mechanism. In Idiomarina loihiensis (strain ATCC BAA-735 / DSM 15497 / L2-TR), this protein is Biotin synthase.